Reading from the N-terminus, the 578-residue chain is A-type ATP synthase subunit A (578 aa).

An ATP-binding site is contributed by Gly-228 to Thr-235.

Belongs to the ATPase alpha/beta chains family. Has multiple subunits with at least A(3), B(3), C, D, E, F, H, I and proteolipid K(x).

It localises to the cell membrane. The enzyme catalyses ATP + H2O + 4 H(+)(in) = ADP + phosphate + 5 H(+)(out). Its function is as follows. Component of the A-type ATP synthase that produces ATP from ADP in the presence of a proton gradient across the membrane. The A chain is the catalytic subunit. This Methanococcoides burtonii (strain DSM 6242 / NBRC 107633 / OCM 468 / ACE-M) protein is A-type ATP synthase subunit A.